Consider the following 570-residue polypeptide: Alpha-glucosidase (570 aa).

The Nucleophile role is filled by Asp206. The active-site Proton donor is Glu263.

It belongs to the glycosyl hydrolase 13 family.

The catalysed reaction is Hydrolysis of terminal, non-reducing (1-&gt;4)-linked alpha-D-glucose residues with release of alpha-D-glucose.. The chain is Alpha-glucosidase (MAL2) from Candida albicans (Yeast).